We begin with the raw amino-acid sequence, 488 residues long: Glutamyl-tRNA(Gln) amidotransferase subunit A (488 aa).

Residues Lys-77 and Ser-152 each act as charge relay system in the active site. Ser-176 serves as the catalytic Acyl-ester intermediate.

It belongs to the amidase family. GatA subfamily. As to quaternary structure, heterotrimer of A, B and C subunits.

It carries out the reaction L-glutamyl-tRNA(Gln) + L-glutamine + ATP + H2O = L-glutaminyl-tRNA(Gln) + L-glutamate + ADP + phosphate + H(+). In terms of biological role, allows the formation of correctly charged Gln-tRNA(Gln) through the transamidation of misacylated Glu-tRNA(Gln) in organisms which lack glutaminyl-tRNA synthetase. The reaction takes place in the presence of glutamine and ATP through an activated gamma-phospho-Glu-tRNA(Gln). The chain is Glutamyl-tRNA(Gln) amidotransferase subunit A from Streptococcus pneumoniae (strain 70585).